A 468-amino-acid polypeptide reads, in one-letter code: bZIP transcription factor 14 (468 aa).

2 disordered regions span residues 55–149 (SRRK…EGRA) and 234–272 (SPQSMSDGGGEEVASTSDVSGDEQQVPDDGIDYDLLGKD). Composition is skewed to low complexity over residues 64–82 (SFVSGSDSSRSSTKSSSGS) and 95–106 (VTAASTESVSSS). A compositionally biased stretch (basic and acidic residues) spans 112–128 (KKADTDDRVQRSRERNR). Residues 117–165 (DDRVQRSRERNRIHARKTRQRKKEQMQSLEGRATDLKHEQIRLKQIINE) form the bZIP 1 domain. The tract at residues 119–139 (RVQRSRERNRIHARKTRQRKK) is basic motif 1. The segment covering 129-138 (IHARKTRQRK) has biased composition (basic residues). The leucine-zipper 1 stretch occupies residues 145–159 (LEGRATDLKHEQIRL). Residues 247–256 (ASTSDVSGDE) are compositionally biased toward polar residues. One can recognise a bZIP 2 domain in the interval 279–333 (EELDQIRRERNRMHAKRTRDRKRIFTEEMAEMCRILEEENHLLRVHLGGLDSDFK). The tract at residues 285-312 (RRERNRMHAKRTRDRKRIFTEEMAEMCR) is basic motif 2. Residues 313–320 (ILEEENHL) form a leucine-zipper 2 region. A disordered region spans residues 400–468 (ERQQREAERK…TTSLAAPVGW (69 aa)). The span at 401–410 (RQQREAERKV) shows a compositional bias: basic and acidic residues. Positions 417-426 (SAASDTSTSD) are enriched in low complexity.

This sequence belongs to the bZIP family.

The protein resides in the nucleus. Transcriptional activator which binds to the C-box-like motif 5'-TGACGT-3' and A-box-like motif 5'-GTACGTA-3' of target promoters to positively regulate the expression of genes involved in the tricarboxylic acid (TCA) cycle in response to nitrogen starvation. May also regulate the TCA cycle during day-to-night transitions. The chain is bZIP transcription factor 14 from Phaeodactylum tricornutum (strain CCAP 1055/1).